The primary structure comprises 166 residues: Ureidoglycolate lyase (166 aa).

It belongs to the ureidoglycolate lyase family. Homodimer. Requires Ni(2+) as cofactor.

It carries out the reaction (S)-ureidoglycolate = urea + glyoxylate. It functions in the pathway nitrogen metabolism; (S)-allantoin degradation. Functionally, catalyzes the catabolism of the allantoin degradation intermediate (S)-ureidoglycolate, generating urea and glyoxylate. Involved in the utilization of allantoin as nitrogen source. The sequence is that of Ureidoglycolate lyase from Rhizobium etli (strain ATCC 51251 / DSM 11541 / JCM 21823 / NBRC 15573 / CFN 42).